Consider the following 90-residue polypeptide: Cell division topological specificity factor (90 aa).

The protein belongs to the MinE family.

Prevents the cell division inhibition by proteins MinC and MinD at internal division sites while permitting inhibition at polar sites. This ensures cell division at the proper site by restricting the formation of a division septum at the midpoint of the long axis of the cell. This chain is Cell division topological specificity factor, found in Lachnoclostridium phytofermentans (strain ATCC 700394 / DSM 18823 / ISDg) (Clostridium phytofermentans).